A 304-amino-acid chain; its full sequence is Cytochrome c biogenesis protein CcsA (304 aa).

8 helical membrane-spanning segments follow: residues 11–31, 37–57, 63–83, 96–116, 141–161, 212–232, 246–263, and 275–295; these read SLGFAGFVLLLLAMPLAFWAV, AGLVRLLVAVANLLFTAQLIL, GHFPISNLYESLCFLAWACTL, IVAAAATPMGLGCIAFASFAL, VIMVSYAALLVGSLLSLAVLV, TITVGFLMLTVGIVSGAVWAN, TWALICWLVYAAYLHTRL, and VAVVGLVVIAVCYIGVNLLGI.

This sequence belongs to the CcmF/CycK/Ccl1/NrfE/CcsA family. In terms of assembly, may interact with ccs1.

The protein localises to the cellular thylakoid membrane. In terms of biological role, required during biogenesis of c-type cytochromes (cytochrome c6 and cytochrome f) at the step of heme attachment. The protein is Cytochrome c biogenesis protein CcsA of Synechococcus sp. (strain CC9605).